Consider the following 347-residue polypeptide: NADH-ubiquinone oxidoreductase chain 2 (347 aa).

11 helical membrane passes run 3–23 (PMIL…VMMS), 25–45 (HWFL…PVLM), 59–79 (YFLT…INLI), 96–116 (TLLT…FWVP), 122–142 (VSLN…LSLL), 149–169 (VNTN…GWGG), 178–198 (IMAY…IYNP), 201–221 (SLLN…LLMF), 239–259 (IITT…PLSG), 274–294 (DSVI…FFYM), and 326–346 (MTSL…AMIL).

The protein belongs to the complex I subunit 2 family. In terms of assembly, core subunit of respiratory chain NADH dehydrogenase (Complex I) which is composed of 45 different subunits. Interacts with TMEM242.

The protein resides in the mitochondrion inner membrane. It carries out the reaction a ubiquinone + NADH + 5 H(+)(in) = a ubiquinol + NAD(+) + 4 H(+)(out). Functionally, core subunit of the mitochondrial membrane respiratory chain NADH dehydrogenase (Complex I) which catalyzes electron transfer from NADH through the respiratory chain, using ubiquinone as an electron acceptor. Essential for the catalytic activity and assembly of complex I. The polypeptide is NADH-ubiquinone oxidoreductase chain 2 (Sylvisorex johnstoni (Johnston's forest shrew)).